A 345-amino-acid polypeptide reads, in one-letter code: Holliday junction branch migration complex subunit RuvB (345 aa).

The large ATPase domain (RuvB-L) stretch occupies residues 1–186 (MSTDPDEREV…FGFTAHMDFY (186 aa)). ATP contacts are provided by residues Leu25, Arg26, Gly67, Lys70, Thr71, Ser72, 133–135 (EDF), Arg176, Tyr186, and Arg223. Thr71 lines the Mg(2+) pocket. The tract at residues 187-257 (EPAELERVLV…VAKAALAVYD (71 aa)) is small ATPAse domain (RuvB-S). Residues 260–345 (ELGLDRLDRA…AGANQPGLFE (86 aa)) are head domain (RuvB-H). DNA is bound by residues Arg315 and Arg320.

Belongs to the RuvB family. Homohexamer. Forms an RuvA(8)-RuvB(12)-Holliday junction (HJ) complex. HJ DNA is sandwiched between 2 RuvA tetramers; dsDNA enters through RuvA and exits via RuvB. An RuvB hexamer assembles on each DNA strand where it exits the tetramer. Each RuvB hexamer is contacted by two RuvA subunits (via domain III) on 2 adjacent RuvB subunits; this complex drives branch migration. In the full resolvosome a probable DNA-RuvA(4)-RuvB(12)-RuvC(2) complex forms which resolves the HJ.

It localises to the cytoplasm. The catalysed reaction is ATP + H2O = ADP + phosphate + H(+). In terms of biological role, the RuvA-RuvB-RuvC complex processes Holliday junction (HJ) DNA during genetic recombination and DNA repair, while the RuvA-RuvB complex plays an important role in the rescue of blocked DNA replication forks via replication fork reversal (RFR). RuvA specifically binds to HJ cruciform DNA, conferring on it an open structure. The RuvB hexamer acts as an ATP-dependent pump, pulling dsDNA into and through the RuvAB complex. RuvB forms 2 homohexamers on either side of HJ DNA bound by 1 or 2 RuvA tetramers; 4 subunits per hexamer contact DNA at a time. Coordinated motions by a converter formed by DNA-disengaged RuvB subunits stimulates ATP hydrolysis and nucleotide exchange. Immobilization of the converter enables RuvB to convert the ATP-contained energy into a lever motion, pulling 2 nucleotides of DNA out of the RuvA tetramer per ATP hydrolyzed, thus driving DNA branch migration. The RuvB motors rotate together with the DNA substrate, which together with the progressing nucleotide cycle form the mechanistic basis for DNA recombination by continuous HJ branch migration. Branch migration allows RuvC to scan DNA until it finds its consensus sequence, where it cleaves and resolves cruciform DNA. In Mycobacterium marinum (strain ATCC BAA-535 / M), this protein is Holliday junction branch migration complex subunit RuvB.